We begin with the raw amino-acid sequence, 387 residues long: 4-hydroxy-3-methylbut-2-en-1-yl diphosphate synthase (flavodoxin) (387 aa).

[4Fe-4S] cluster contacts are provided by Cys-293, Cys-296, Cys-328, and Glu-335.

It belongs to the IspG family. Requires [4Fe-4S] cluster as cofactor.

The enzyme catalyses (2E)-4-hydroxy-3-methylbut-2-enyl diphosphate + oxidized [flavodoxin] + H2O + 2 H(+) = 2-C-methyl-D-erythritol 2,4-cyclic diphosphate + reduced [flavodoxin]. It functions in the pathway isoprenoid biosynthesis; isopentenyl diphosphate biosynthesis via DXP pathway; isopentenyl diphosphate from 1-deoxy-D-xylulose 5-phosphate: step 5/6. Functionally, converts 2C-methyl-D-erythritol 2,4-cyclodiphosphate (ME-2,4cPP) into 1-hydroxy-2-methyl-2-(E)-butenyl 4-diphosphate. This chain is 4-hydroxy-3-methylbut-2-en-1-yl diphosphate synthase (flavodoxin), found in Treponema denticola (strain ATCC 35405 / DSM 14222 / CIP 103919 / JCM 8153 / KCTC 15104).